The sequence spans 800 residues: MQKAAPRPIIKRSYLNLDAIFGHVFSNLTGEPVTPTKIATFYLLRILFQTHFGFRHKRAYYKPFSPAEKERIFHWLYALMTSVVELSYKDFRIVTRLAFDDGREVCKNFYAAMEKIGAGMADVTLNVEDEFYTNKHPKDPKLPANDTVHEAMDLARGDIIQFSSNHSFMYRWMKRLLAQYTKSTPSEVFQINAAMKSWVLSAVESKYHPEFKGEYLPHFIDCSVRARDWVAKSIYFIQKNPRFAFQYNEMLHYTRIVQKRHPDVVEGFLLEAIVQVQLKDSSSAIKAMKSFFELSMFELNENMVHAAKTHRLAVPTQTPLMYAPILQARICRIFGDYQMARLLLHESLQQAQLRNDEICHQMANIEMHTVDILGCRALLEDNNEKTAKHIENERRVQRKALLHIDDLHGHTRSGPCCLSSEEDFELVAEMDSYGKMLMLMKIIAEGNYKLIYDRVAETGITCPVGNDLGERGRKVAAYGAALISSNMIHNGMYHQAKCAAENMLANNCRTDETDPFQAPFQAEPWAIGAVNLSYSQAGVGNYDAALRTIEEMRQNYPEELSWQSNRHVVICAAVINFERFLLKNDYKACASEVLNLAAHSELECKLRQALLLAAAGKERASVEVLEGLNVVDIRGRIRIHMQTGCIYTASQEFRKAAREFADALSLAENTTLKDIVPMVKRRQATMLMCHGQYVECLKLLKECNEGIEQFGSFTEKACYYMTAARCHRLLGKDPRMWLKKSRALVRNGQWPAFTKLVLSEIAALHDVKGLMPDENRLSQICEQFGKLTADCPGRCEWLLI.

Positions 346–366 (ESLQQAQLRNDEICHQMANIE) form a coiled coil. TPR repeat units lie at residues 526–559 (AIGA…YPEE) and 637–670 (IRIH…AENT).

The APC/C complex is probably composed of at least 12 subunits: apc-2, apc-10, apc-11, cdc-26, emb-1, emb-27, emb-30, mat-1, mat-2, mat-3, such-1 and gfi-3. Expressed in gut cells and mature sperm stored in the spermatheca.

Its pathway is protein modification; protein ubiquitination. Functionally, probable component of the anaphase promoting complex/cyclosome (APC/C), a cell cycle-regulated E3 ubiquitin ligase that controls progression through mitosis and the G1 phase of the cell cycle. The APC/C complex acts by mediating ubiquitination and subsequent degradation of target proteins. Required for the metaphase to anaphase transition in meiosis. The protein is Protein gfi-3 of Caenorhabditis elegans.